Here is a 60-residue protein sequence, read N- to C-terminus: Large ribosomal subunit protein bL32 (60 aa).

The disordered stretch occupies residues 1–60 (MAVQQNKKSPSKRGMHRSHDFLVNPATAIEPNTGETHLRHHISPNGFYRGRKVLKTKADE). Residues 49-60 (RGRKVLKTKADE) show a composition bias toward basic residues.

This sequence belongs to the bacterial ribosomal protein bL32 family.

This is Large ribosomal subunit protein bL32 from Bordetella bronchiseptica (strain ATCC BAA-588 / NCTC 13252 / RB50) (Alcaligenes bronchisepticus).